The primary structure comprises 427 residues: Serine--tRNA ligase (427 aa).

235 to 237 serves as a coordination point for L-serine; sequence TAE. ATP is bound by residues 266-268 and V282; that span reads RRE. E289 is an L-serine binding site. 353-356 is a binding site for ATP; the sequence is EASS. S389 serves as a coordination point for L-serine.

Belongs to the class-II aminoacyl-tRNA synthetase family. Type-1 seryl-tRNA synthetase subfamily. As to quaternary structure, homodimer. The tRNA molecule binds across the dimer.

It localises to the cytoplasm. It catalyses the reaction tRNA(Ser) + L-serine + ATP = L-seryl-tRNA(Ser) + AMP + diphosphate + H(+). It carries out the reaction tRNA(Sec) + L-serine + ATP = L-seryl-tRNA(Sec) + AMP + diphosphate + H(+). Its pathway is aminoacyl-tRNA biosynthesis; selenocysteinyl-tRNA(Sec) biosynthesis; L-seryl-tRNA(Sec) from L-serine and tRNA(Sec): step 1/1. Catalyzes the attachment of serine to tRNA(Ser). Is also able to aminoacylate tRNA(Sec) with serine, to form the misacylated tRNA L-seryl-tRNA(Sec), which will be further converted into selenocysteinyl-tRNA(Sec). In Chlorobium phaeobacteroides (strain BS1), this protein is Serine--tRNA ligase.